A 241-amino-acid polypeptide reads, in one-letter code: Uridylate kinase (241 aa).

Residue 12 to 15 participates in ATP binding; it reads KISG. An involved in allosteric activation by GTP region spans residues 20–25; that stretch reads GEKGTG. UMP is bound at residue glycine 54. Glycine 55 and arginine 59 together coordinate ATP. Residues aspartate 74 and 135–142 contribute to the UMP site; that span reads TGNPYFST. Residues asparagine 163, tyrosine 169, and aspartate 172 each coordinate ATP.

Belongs to the UMP kinase family. Homohexamer.

Its subcellular location is the cytoplasm. The enzyme catalyses UMP + ATP = UDP + ADP. It functions in the pathway pyrimidine metabolism; CTP biosynthesis via de novo pathway; UDP from UMP (UMPK route): step 1/1. With respect to regulation, allosterically activated by GTP. Inhibited by UTP. In terms of biological role, catalyzes the reversible phosphorylation of UMP to UDP. This Lactobacillus delbrueckii subsp. bulgaricus (strain ATCC 11842 / DSM 20081 / BCRC 10696 / JCM 1002 / NBRC 13953 / NCIMB 11778 / NCTC 12712 / WDCM 00102 / Lb 14) protein is Uridylate kinase.